The following is an 84-amino-acid chain: UPF0248 protein PF1300 (84 aa).

Belongs to the UPF0248 family.

The protein is UPF0248 protein PF1300 of Pyrococcus furiosus (strain ATCC 43587 / DSM 3638 / JCM 8422 / Vc1).